Here is a 499-residue protein sequence, read N- to C-terminus: MEFSTQTTASLHQIKTAALAVGVFADGVLSAAAEVIDRASHGAVAAVVKSEFRGRTGGTLVLRSLAGVSAQRVVLVGLGKQAEYNARAHASAEQAFAAACVAAQVGEGVSTLAGVAIEGVPVRARARSAAIAAGAAAYHYDATFGKANRDARPRLKKIVQVVDRAASAQTQLGLREGAAIAHGMELTRTLGNLPGNVCTPAYLGNTAKKLAREFKSLKVEVLERKQVEALGMGSFLSVARGSEEPLRFIVLRHAGKPAKKDKAGPVVLVGKGITFDAGGISLKPAATMDEMKYDMCGAASVLGTFRALAELELPLDVVGLIAACENLPSGKANKPGDVVTSMSGQTIEILNTDAEGRLVLCDALTYAERFKPAAVIDIATLTGACVVALGNVNSGLFSKDDALADALLAASRQSLDPAWRLPLDDAYQDQLKSNFADIANIGGPPAGAVTAACFLSRFTKAYPWAHLDIAGTAWRGGKDKGATGRPVPLLMQYLLDQAG.

2 residues coordinate Mn(2+): K271 and D276. K283 is an active-site residue. Mn(2+) contacts are provided by D294, D353, and E355. The active site involves R357.

This sequence belongs to the peptidase M17 family. Mn(2+) is required as a cofactor.

It is found in the cytoplasm. The enzyme catalyses Release of an N-terminal amino acid, Xaa-|-Yaa-, in which Xaa is preferably Leu, but may be other amino acids including Pro although not Arg or Lys, and Yaa may be Pro. Amino acid amides and methyl esters are also readily hydrolyzed, but rates on arylamides are exceedingly low.. It carries out the reaction Release of an N-terminal amino acid, preferentially leucine, but not glutamic or aspartic acids.. Presumably involved in the processing and regular turnover of intracellular proteins. Catalyzes the removal of unsubstituted N-terminal amino acids from various peptides. The polypeptide is Probable cytosol aminopeptidase (Bordetella parapertussis (strain 12822 / ATCC BAA-587 / NCTC 13253)).